The primary structure comprises 894 residues: Alanine--tRNA ligase (894 aa).

This sequence belongs to the class-II aminoacyl-tRNA synthetase family.

It localises to the cytoplasm. The enzyme catalyses tRNA(Ala) + L-alanine + ATP = L-alanyl-tRNA(Ala) + AMP + diphosphate. Its function is as follows. Catalyzes the attachment of alanine to tRNA(Ala) in a two-step reaction: alanine is first activated by ATP to form Ala-AMP and then transferred to the acceptor end of tRNA(Ala). Also edits incorrectly charged Ser-tRNA(Ala) and Gly-tRNA(Ala) via its editing domain. The sequence is that of Alanine--tRNA ligase (alaS) from Leuconostoc citreum (strain KM20).